Reading from the N-terminus, the 912-residue chain is Protein translocase subunit SecA (912 aa).

Residues Q87, 105 to 109, and D512 each bind ATP; that span reads GEGKT. 4 residues coordinate Zn(2+): C896, C898, C907, and H908.

This sequence belongs to the SecA family. In terms of assembly, monomer and homodimer. Part of the essential Sec protein translocation apparatus which comprises SecA, SecYEG and auxiliary proteins SecDF-YajC and YidC. It depends on Zn(2+) as a cofactor.

Its subcellular location is the cell inner membrane. It localises to the cytoplasm. It carries out the reaction ATP + H2O + cellular proteinSide 1 = ADP + phosphate + cellular proteinSide 2.. Part of the Sec protein translocase complex. Interacts with the SecYEG preprotein conducting channel. Has a central role in coupling the hydrolysis of ATP to the transfer of proteins into and across the cell membrane, serving both as a receptor for the preprotein-SecB complex and as an ATP-driven molecular motor driving the stepwise translocation of polypeptide chains across the membrane. This chain is Protein translocase subunit SecA, found in Pseudomonas fluorescens (strain Pf0-1).